Consider the following 674-residue polypeptide: tRNA 5-methylaminomethyl-2-thiouridine biosynthesis bifunctional protein MnmC (674 aa).

Residues 1-248 are tRNA (mnm(5)s(2)U34)-methyltransferase; that stretch reads MAASSLPSHN…KREMCFGRYA (248 aa). The interval 276–674 is FAD-dependent cmnm(5)s(2)U34 oxidoreductase; it reads IGAGLAGATV…AIRHWRSGKR (399 aa).

It in the N-terminal section; belongs to the methyltransferase superfamily. tRNA (mnm(5)s(2)U34)-methyltransferase family. This sequence in the C-terminal section; belongs to the DAO family. Requires FAD as cofactor.

It localises to the cytoplasm. It carries out the reaction 5-aminomethyl-2-thiouridine(34) in tRNA + S-adenosyl-L-methionine = 5-methylaminomethyl-2-thiouridine(34) in tRNA + S-adenosyl-L-homocysteine + H(+). Its function is as follows. Catalyzes the last two steps in the biosynthesis of 5-methylaminomethyl-2-thiouridine (mnm(5)s(2)U) at the wobble position (U34) in tRNA. Catalyzes the FAD-dependent demodification of cmnm(5)s(2)U34 to nm(5)s(2)U34, followed by the transfer of a methyl group from S-adenosyl-L-methionine to nm(5)s(2)U34, to form mnm(5)s(2)U34. The protein is tRNA 5-methylaminomethyl-2-thiouridine biosynthesis bifunctional protein MnmC of Hydrogenovibrio crunogenus (strain DSM 25203 / XCL-2) (Thiomicrospira crunogena).